A 109-amino-acid polypeptide reads, in one-letter code: Parvalbumin, thymic (109 aa).

The residue at position 2 (alanine 2) is an N-acetylalanine. 2 consecutive EF-hand domains span residues 39-74 (KTPDQIKKVFGILDQDKSGFIEEEELQLFLKNFSSS) and 78-109 (LTSAETKAFLAAGDTDGDGKIGVEEFQSLVKA). Aspartate 52, aspartate 54, serine 56, glutamate 63, aspartate 91, aspartate 93, aspartate 95, lysine 97, and glutamate 102 together coordinate Ca(2+).

This sequence belongs to the parvalbumin family.

In terms of biological role, appears to promote immune maturation in bone marrow cells in culture. Binds two calcium ions. The sequence is that of Parvalbumin, thymic from Gallus gallus (Chicken).